We begin with the raw amino-acid sequence, 485 residues long: Fumarate hydratase, mitochondrial (485 aa).

The transit peptide at 1-19 (MLSASRKLNNQQFLKTIRN) directs the protein to the mitochondrion. Substrate contacts are provided by residues 118 to 120 (SGT), 150 to 153 (HPND), 160 to 162 (SSN), and threonine 208. Histidine 209 (proton donor/acceptor) is an active-site residue. Serine 339 is an active-site residue. Residues serine 340 and 345–347 (KVN) each bind substrate.

It belongs to the class-II fumarase/aspartase family. Fumarase subfamily. In terms of assembly, homotetramer.

The protein localises to the mitochondrion. It is found in the cytoplasm. It catalyses the reaction (S)-malate = fumarate + H2O. It functions in the pathway carbohydrate metabolism; tricarboxylic acid cycle; (S)-malate from fumarate: step 1/1. Functionally, catalyzes the reversible stereospecific interconversion of fumarate to L-malate. Catalyzes the hydration of fumarate to L-malate in the tricarboxylic acid (TCA) cycle to facilitate a transition step in the production of energy in the form of NADH. The protein is Fumarate hydratase, mitochondrial of Dictyostelium discoideum (Social amoeba).